A 166-amino-acid chain; its full sequence is 3-isopropylmalate dehydratase small subunit (166 aa).

The protein belongs to the LeuD family. LeuD type 2 subfamily. Heterodimer of LeuC and LeuD.

It catalyses the reaction (2R,3S)-3-isopropylmalate = (2S)-2-isopropylmalate. The protein operates within amino-acid biosynthesis; L-leucine biosynthesis; L-leucine from 3-methyl-2-oxobutanoate: step 2/4. Functionally, catalyzes the isomerization between 2-isopropylmalate and 3-isopropylmalate, via the formation of 2-isopropylmaleate. The chain is 3-isopropylmalate dehydratase small subunit from Caldicellulosiruptor bescii (strain ATCC BAA-1888 / DSM 6725 / KCTC 15123 / Z-1320) (Anaerocellum thermophilum).